Reading from the N-terminus, the 145-residue chain is Large ribosomal subunit protein uL15 (145 aa).

Positions 23–51 (IGSGWGKTGGRGHKGQKSRSGGKIRKSFE) are disordered. The span at 32–47 (GRGHKGQKSRSGGKIR) shows a compositional bias: basic residues.

The protein belongs to the universal ribosomal protein uL15 family. As to quaternary structure, part of the 50S ribosomal subunit.

Functionally, binds to the 23S rRNA. The sequence is that of Large ribosomal subunit protein uL15 from Buchnera aphidicola subsp. Cinara cedri (strain Cc).